Consider the following 422-residue polypeptide: Glutamate-1-semialdehyde 2,1-aminomutase (422 aa).

K258 is modified (N6-(pyridoxal phosphate)lysine).

The protein belongs to the class-III pyridoxal-phosphate-dependent aminotransferase family. HemL subfamily. As to quaternary structure, homodimer. The cofactor is pyridoxal 5'-phosphate.

The protein resides in the cytoplasm. The enzyme catalyses (S)-4-amino-5-oxopentanoate = 5-aminolevulinate. The protein operates within porphyrin-containing compound metabolism; protoporphyrin-IX biosynthesis; 5-aminolevulinate from L-glutamyl-tRNA(Glu): step 2/2. This chain is Glutamate-1-semialdehyde 2,1-aminomutase, found in Chlamydia trachomatis serovar D (strain ATCC VR-885 / DSM 19411 / UW-3/Cx).